Here is a 429-residue protein sequence, read N- to C-terminus: Adenylosuccinate synthetase (429 aa).

Residues 12–18 (GDEGKGK) and 40–42 (GHT) contribute to the GTP site. The active-site Proton acceptor is aspartate 13. Mg(2+) is bound by residues aspartate 13 and glycine 40. IMP-binding positions include 13 to 16 (DEGK), 38 to 41 (NAGH), threonine 128, arginine 142, glutamine 223, threonine 238, and arginine 302. Catalysis depends on histidine 41, which acts as the Proton donor. 298–304 (TVTGRPR) provides a ligand contact to substrate. GTP-binding positions include arginine 304, 330-332 (LLD), and 412-414 (SVG).

The protein belongs to the adenylosuccinate synthetase family. As to quaternary structure, homodimer. Mg(2+) is required as a cofactor.

The protein resides in the cytoplasm. It catalyses the reaction IMP + L-aspartate + GTP = N(6)-(1,2-dicarboxyethyl)-AMP + GDP + phosphate + 2 H(+). It participates in purine metabolism; AMP biosynthesis via de novo pathway; AMP from IMP: step 1/2. Its function is as follows. Plays an important role in the de novo pathway of purine nucleotide biosynthesis. Catalyzes the first committed step in the biosynthesis of AMP from IMP. The chain is Adenylosuccinate synthetase from Lactobacillus helveticus (strain DPC 4571).